The chain runs to 968 residues: RNA polymerase-associated protein RapA (968 aa).

In terms of domain architecture, Helicase ATP-binding spans 164 to 334 (DVGRRHAPRV…FARLRLLDPN (171 aa)). 177-184 (DEVGLGKT) is a binding site for ATP. Positions 280 to 283 (DEAH) match the DEAH box motif. The Helicase C-terminal domain occupies 490–685 (RVEWLMGYLT…ALKAQLEQGR (196 aa)).

This sequence belongs to the SNF2/RAD54 helicase family. RapA subfamily. Interacts with the RNAP. Has a higher affinity for the core RNAP than for the holoenzyme. Its ATPase activity is stimulated by binding to RNAP.

Functionally, transcription regulator that activates transcription by stimulating RNA polymerase (RNAP) recycling in case of stress conditions such as supercoiled DNA or high salt concentrations. Probably acts by releasing the RNAP, when it is trapped or immobilized on tightly supercoiled DNA. Does not activate transcription on linear DNA. Probably not involved in DNA repair. This is RNA polymerase-associated protein RapA from Salmonella schwarzengrund (strain CVM19633).